A 510-amino-acid polypeptide reads, in one-letter code: Glutamyl-tRNA(Gln) amidotransferase subunit A (510 aa).

Active-site charge relay system residues include Lys-82 and Ser-157. Ser-181 acts as the Acyl-ester intermediate in catalysis.

Belongs to the amidase family. GatA subfamily. In terms of assembly, heterotrimer of A, B and C subunits.

It catalyses the reaction L-glutamyl-tRNA(Gln) + L-glutamine + ATP + H2O = L-glutaminyl-tRNA(Gln) + L-glutamate + ADP + phosphate + H(+). In terms of biological role, allows the formation of correctly charged Gln-tRNA(Gln) through the transamidation of misacylated Glu-tRNA(Gln) in organisms which lack glutaminyl-tRNA synthetase. The reaction takes place in the presence of glutamine and ATP through an activated gamma-phospho-Glu-tRNA(Gln). This is Glutamyl-tRNA(Gln) amidotransferase subunit A from Bordetella avium (strain 197N).